Consider the following 286-residue polypeptide: Acetyl-coenzyme A carboxylase carboxyl transferase subunit beta (286 aa).

The CoA carboxyltransferase N-terminal domain occupies 27-286 (LMTKCPKCKL…HSEETNHATI (260 aa)). Residues Cys31, Cys34, Cys50, and Cys52 each coordinate Zn(2+). The C4-type zinc-finger motif lies at 31-52 (CPKCKLIQYTKQLEANLKVCVC).

It belongs to the AccD/PCCB family. As to quaternary structure, acetyl-CoA carboxylase is a heterohexamer composed of biotin carboxyl carrier protein (AccB), biotin carboxylase (AccC) and two subunits each of ACCase subunit alpha (AccA) and ACCase subunit beta (AccD). Zn(2+) serves as cofactor.

The protein localises to the cytoplasm. It carries out the reaction N(6)-carboxybiotinyl-L-lysyl-[protein] + acetyl-CoA = N(6)-biotinyl-L-lysyl-[protein] + malonyl-CoA. The protein operates within lipid metabolism; malonyl-CoA biosynthesis; malonyl-CoA from acetyl-CoA: step 1/1. Functionally, component of the acetyl coenzyme A carboxylase (ACC) complex. Biotin carboxylase (BC) catalyzes the carboxylation of biotin on its carrier protein (BCCP) and then the CO(2) group is transferred by the transcarboxylase to acetyl-CoA to form malonyl-CoA. This chain is Acetyl-coenzyme A carboxylase carboxyl transferase subunit beta, found in Exiguobacterium sibiricum (strain DSM 17290 / CCUG 55495 / CIP 109462 / JCM 13490 / 255-15).